A 229-amino-acid polypeptide reads, in one-letter code: Transcriptional regulatory protein CreB (229 aa).

Positions 5 to 119 (TVWLVEDEQG…EVCARVRTLL (115 aa)) constitute a Response regulatory domain. The residue at position 54 (Asp54) is a 4-aspartylphosphate. The ompR/PhoB-type DNA-binding region spans 129–228 (SPVIRIGHFE…HRGMGYSLRG (100 aa)).

Phosphorylated by CreC.

Its subcellular location is the cytoplasm. Its function is as follows. Member of the two-component regulatory system CreC/CreB involved in catabolic regulation. The protein is Transcriptional regulatory protein CreB (creB) of Escherichia coli (strain K12).